A 231-amino-acid chain; its full sequence is Ribose-5-phosphate isomerase A (231 aa).

Substrate contacts are provided by residues 23-26 (SGST), 80-83 (DGAD), and 93-96 (KGGG). E102 functions as the Proton acceptor in the catalytic mechanism. K120 serves as a coordination point for substrate.

Belongs to the ribose 5-phosphate isomerase family. As to quaternary structure, homodimer.

The enzyme catalyses aldehydo-D-ribose 5-phosphate = D-ribulose 5-phosphate. Its pathway is carbohydrate degradation; pentose phosphate pathway; D-ribose 5-phosphate from D-ribulose 5-phosphate (non-oxidative stage): step 1/1. Functionally, catalyzes the reversible conversion of ribose-5-phosphate to ribulose 5-phosphate. The chain is Ribose-5-phosphate isomerase A from Prochlorococcus marinus subsp. pastoris (strain CCMP1986 / NIES-2087 / MED4).